The primary structure comprises 104 residues: Large ribosomal subunit protein uL24 (104 aa).

This sequence belongs to the universal ribosomal protein uL24 family. In terms of assembly, part of the 50S ribosomal subunit.

Functionally, one of two assembly initiator proteins, it binds directly to the 5'-end of the 23S rRNA, where it nucleates assembly of the 50S subunit. Its function is as follows. One of the proteins that surrounds the polypeptide exit tunnel on the outside of the subunit. This chain is Large ribosomal subunit protein uL24, found in Alteromonas mediterranea (strain DSM 17117 / CIP 110805 / LMG 28347 / Deep ecotype).